The following is a 71-amino-acid chain: MRTRIKEFRAKFNMTQEELAKRVGVRRETIVFLEKGKYNPSLKLAYKIARVFNAKIEDIFIFDEEELWEKR.

Residues 5-59 (IKEFRAKFNMTQEELAKRVGVRRETIVFLEKGKYNPSLKLAYKIARVFNAKIEDI) form the HTH cro/C1-type domain. The H-T-H motif DNA-binding region spans 16–35 (QEELAKRVGVRRETIVFLEK).

This is an uncharacterized protein from Archaeoglobus fulgidus (strain ATCC 49558 / DSM 4304 / JCM 9628 / NBRC 100126 / VC-16).